Consider the following 136-residue polypeptide: Piercer of microtubule wall 1 protein (136 aa).

Residues 1-24 (MAEECPRACAEPVAPKATAPPERT) form a disordered region.

This sequence belongs to the PIERCE1 family. As to quaternary structure, microtubule inner protein component of sperm flagellar doublet microtubules. Interacts with CFAP53, ODAD1 and ODAD3; the interactions link the outer dynein arms docking complex (ODA-DC) to the internal microtubule inner proteins (MIP) in cilium axoneme. Expressed in airway epithelial cells.

It is found in the cytoplasm. The protein localises to the cytoskeleton. It localises to the cilium axoneme. The protein resides in the flagellum axoneme. In terms of biological role, microtubule inner protein involved in the attachment of outer dynein arms (ODAs) to dynein-decorated doublet microtubules (DMTs) in cilia axoneme, which is required for motile cilia beating. Functions at the initial step of left-right asymmetry specification of the visceral organs. The protein is Piercer of microtubule wall 1 protein of Homo sapiens (Human).